A 1166-amino-acid polypeptide reads, in one-letter code: DEAD-box ATP-dependent RNA helicase 42 (1166 aa).

Basic and acidic residues-rich tracts occupy residues 1–12 (MEVEKSKYRSED) and 21–45 (DLKK…EKRR). Residues 1-460 (MEVEKSKYRS…NDDDPSLDED (460 aa)) are disordered. Residues 14 to 95 (DVVEEEADLK…KDRVKRRSER (82 aa)) adopt a coiled-coil conformation. The span at 59–70 (SEDDYDRDDDEE) shows a compositional bias: acidic residues. A compositionally biased stretch (basic residues) spans 80–95 (ERRRRDKDRVKRRSER). Positions 101–110 (SEDDVEEEDE) are enriched in acidic residues. A compositionally biased stretch (basic and acidic residues) spans 111–206 (RDKRRVNEKE…RERERSREVG (96 aa)). A coiled-coil region spans residues 130 to 302 (RGKDRKRDRE…KRKKEEAESE (173 aa)). Phosphoserine is present on Ser-210. A compositionally biased stretch (basic and acidic residues) spans 224–314 (EGGERKEKER…GDADGNEPKA (91 aa)). Ser-324 is subject to Phosphoserine. 2 stretches are compositionally biased toward basic and acidic residues: residues 344–357 (ETKP…KMVD) and 416–426 (MNGKESGDRPK). A Q motif motif is present at residues 529–557 (KFWHQTGLTSKILDTMKKLNYEKPMPIQT). In terms of domain architecture, Helicase ATP-binding spans 560–738 (LPIIMSGRDC…RKVLNKPVEI (179 aa)). 573 to 580 (AKTGSGKT) contributes to the ATP binding site. Residues 686–689 (DEAD) carry the DEAD box motif. A Helicase C-terminal domain is found at 749-910 (DITQLVEVRP…PVPDDLKALA (162 aa)).

The protein belongs to the DEAD box helicase family. DDX46/PRP5 subfamily.

The protein localises to the nucleus. The enzyme catalyses ATP + H2O = ADP + phosphate + H(+). Its function is as follows. Helicase required for pre-mRNA splicing, cold-responsive gene regulation and cold tolerance. The chain is DEAD-box ATP-dependent RNA helicase 42 (RH42) from Arabidopsis thaliana (Mouse-ear cress).